The following is a 39-amino-acid chain: Photosystem II reaction center protein X (39 aa).

The helical transmembrane segment at 10–30 (WSLVLGAAIVLIPATIGLIFI) threads the bilayer.

It belongs to the PsbX family. Type 1 subfamily. In terms of assembly, PSII is composed of 1 copy each of membrane proteins PsbA, PsbB, PsbC, PsbD, PsbE, PsbF, PsbH, PsbI, PsbJ, PsbK, PsbL, PsbM, PsbT, PsbX, PsbY, PsbZ, Psb30/Ycf12, peripheral proteins PsbO, CyanoQ (PsbQ), PsbU, PsbV and a large number of cofactors. It forms dimeric complexes.

The protein resides in the cellular thylakoid membrane. Functionally, involved in the binding and/or turnover of quinones at the Q(B) site of photosystem II (PSII). PSII is a light-driven water plastoquinone oxidoreductase, using light energy to abstract electrons from H(2)O, generating a proton gradient subsequently used for ATP formation. This is Photosystem II reaction center protein X from Microcystis aeruginosa (strain NIES-843 / IAM M-2473).